The primary structure comprises 465 residues: UDP-N-acetylmuramate--L-alanine ligase (465 aa).

112-118 (GTHGKTT) is a binding site for ATP.

The protein belongs to the MurCDEF family.

It localises to the cytoplasm. The enzyme catalyses UDP-N-acetyl-alpha-D-muramate + L-alanine + ATP = UDP-N-acetyl-alpha-D-muramoyl-L-alanine + ADP + phosphate + H(+). It functions in the pathway cell wall biogenesis; peptidoglycan biosynthesis. Cell wall formation. In Burkholderia vietnamiensis (strain G4 / LMG 22486) (Burkholderia cepacia (strain R1808)), this protein is UDP-N-acetylmuramate--L-alanine ligase.